The chain runs to 429 residues: Adenylosuccinate synthetase (429 aa).

GTP-binding positions include 12–18 (GDEGKGK) and 40–42 (GHT). The active-site Proton acceptor is D13. 2 residues coordinate Mg(2+): D13 and G40. IMP-binding positions include 13–16 (DEGK), 38–41 (NAGH), T129, R143, Q223, T238, and R302. H41 serves as the catalytic Proton donor. Residue 298-304 (VVTGRKR) coordinates substrate. Residues R304, 330–332 (KLD), and 412–414 (STS) each bind GTP.

It belongs to the adenylosuccinate synthetase family. Homodimer. Requires Mg(2+) as cofactor.

Its subcellular location is the cytoplasm. The catalysed reaction is IMP + L-aspartate + GTP = N(6)-(1,2-dicarboxyethyl)-AMP + GDP + phosphate + 2 H(+). Its pathway is purine metabolism; AMP biosynthesis via de novo pathway; AMP from IMP: step 1/2. Plays an important role in the de novo pathway of purine nucleotide biosynthesis. Catalyzes the first committed step in the biosynthesis of AMP from IMP. This chain is Adenylosuccinate synthetase, found in Bartonella bacilliformis (strain ATCC 35685 / KC583 / Herrer 020/F12,63).